Reading from the N-terminus, the 244-residue chain is Small ribosomal subunit protein uS3 (244 aa).

One can recognise a KH type-2 domain in the interval 39–107; that stretch reads VREMLRKKLA…PAHINVTEVR (69 aa). The interval 213–244 is disordered; the sequence is VGQEKQDDSPRNDRNDRGDRGDRPSRPAREAR. Over residues 216–244 the composition is skewed to basic and acidic residues; it reads EKQDDSPRNDRNDRGDRGDRPSRPAREAR.

This sequence belongs to the universal ribosomal protein uS3 family. As to quaternary structure, part of the 30S ribosomal subunit. Forms a tight complex with proteins S10 and S14.

Binds the lower part of the 30S subunit head. Binds mRNA in the 70S ribosome, positioning it for translation. The protein is Small ribosomal subunit protein uS3 of Xanthomonas euvesicatoria pv. vesicatoria (strain 85-10) (Xanthomonas campestris pv. vesicatoria).